The chain runs to 953 residues: Coatomer subunit beta-1 (953 aa).

HEAT repeat units follow at residues 49 to 87 (ETLPHLFITVVRYVLPSEDHTIQKLLLLYLEIVDKRDVA), 93 to 127 (PEMILICQNLRNNLQHPNEYIRGVTLRFLCRLNEP), 128 to 165 (ELLEPLIPSILANLDHRHHFIRRHALSAISAIYRLPHG), 314 to 351 (DVMVDVVMDVLRALSSPNVDVRRKVLDLVLDLLTPRNV), and 393 to 430 (EVAGSVVHLLMDFLGDTNVAAAVDVVLFVREIIETNPK).

As to quaternary structure, oligomeric complex that consists of at least the alpha, beta, beta', gamma, delta, epsilon and zeta subunits.

It localises to the cytoplasm. It is found in the golgi apparatus membrane. Its subcellular location is the cytoplasmic vesicle. The protein resides in the COPI-coated vesicle membrane. Functionally, the coatomer is a cytosolic protein complex that binds to dilysine motifs and reversibly associates with Golgi non-clathrin-coated vesicles, which further mediate biosynthetic protein transport from the ER, via the Golgi up to the trans Golgi network. Coatomer complex is required for budding from Golgi membranes, and is essential for the retrograde Golgi-to-ER transport of dilysine-tagged proteins. In Oryza sativa subsp. japonica (Rice), this protein is Coatomer subunit beta-1.